A 467-amino-acid chain; its full sequence is Cysteine--tRNA ligase (467 aa).

C28 serves as a coordination point for Zn(2+). A 'HIGH' region motif is present at residues 30-40; it reads MTVYDHCHLGH. Zn(2+) contacts are provided by C209, H234, and E238. A 'KMSKS' region motif is present at residues 266-270; that stretch reads KMSKS. K269 contributes to the ATP binding site.

The protein belongs to the class-I aminoacyl-tRNA synthetase family. As to quaternary structure, monomer. It depends on Zn(2+) as a cofactor.

It localises to the cytoplasm. The catalysed reaction is tRNA(Cys) + L-cysteine + ATP = L-cysteinyl-tRNA(Cys) + AMP + diphosphate. The protein is Cysteine--tRNA ligase of Nitrosomonas eutropha (strain DSM 101675 / C91 / Nm57).